The following is a 189-amino-acid chain: Thermostable direct hemolysin (189 aa).

The N-terminal stretch at 1–24 (MKYQYFAKKSFLFISMLAAFKTFA) is a signal peptide. A disulfide bridge links Cys175 with Cys185.

This sequence belongs to the TDH hemolysin family. Homodimer.

In terms of biological role, bacterial hemolysins are exotoxins that attack blood cell membranes and cause cell rupture by mechanisms not clearly defined. The chain is Thermostable direct hemolysin (tdh) from Vibrio mimicus.